The chain runs to 325 residues: Transcription initiation factor IIB 2 (325 aa).

The segment covering 1–13 has biased composition (polar residues); it reads MSDSTIRTYSSDQ. The segment at 1-29 is disordered; the sequence is MSDSTIRTYSSDQRQTDNDETVSTPDEDV. Residues 28 to 58 form a TFIIB-type zinc finger; that stretch reads DVLTCPECGGQVIDDEEHGESVCVDCGLVVE. Zn(2+)-binding residues include C32, C35, C50, and C53. The interval 73-93 is disordered; it reads STEKDEKSRVGAPTTNMMHDK. Tandem repeats lie at residues 144-227 and 238-319.

This sequence belongs to the TFIIB family.

Its function is as follows. Stabilizes TBP binding to an archaeal box-A promoter. Also responsible for recruiting RNA polymerase II to the pre-initiation complex (DNA-TBP-TFIIB). The protein is Transcription initiation factor IIB 2 of Halobacterium salinarum (strain ATCC 700922 / JCM 11081 / NRC-1) (Halobacterium halobium).